Here is a 257-residue protein sequence, read N- to C-terminus: Glucanase inhibitor protein 1 (257 aa).

The N-terminal stretch at 1–28 (MKVFPALTSALVALGTAGVEAEHVQRSL) is a signal peptide. The Peptidase S1 domain maps to 29-256 (VMGGGTVPVG…GLEWINSVIK (228 aa)). The cysteines at positions 56 and 72 are disulfide-linked. Asn-107 and Asn-180 each carry an N-linked (GlcNAc...) asparagine glycan. Cystine bridges form between Cys-181–Cys-191 and Cys-201–Cys-232. Asn-213 is a glycosylation site (N-linked (GlcNAc...) asparagine).

It belongs to the peptidase S1 family. In terms of assembly, interacts with host endoglucanases EGaseA.

It localises to the secreted. In terms of biological role, secreted effector that suppresses host plant glucan elicitor-mediated defense responses. Targets host endoglucanase EGaseA and inhibits the EGaseA-mediated release of elicitor-active glucan oligosaccharides from P.sojae cell walls. In Phytophthora sojae (Soybean stem and root rot agent), this protein is Glucanase inhibitor protein 1.